Consider the following 129-residue polypeptide: Small ribosomal subunit protein uS11 (129 aa).

Belongs to the universal ribosomal protein uS11 family. As to quaternary structure, part of the 30S ribosomal subunit. Interacts with proteins S7 and S18. Binds to IF-3.

Functionally, located on the platform of the 30S subunit, it bridges several disparate RNA helices of the 16S rRNA. Forms part of the Shine-Dalgarno cleft in the 70S ribosome. This Oceanobacillus iheyensis (strain DSM 14371 / CIP 107618 / JCM 11309 / KCTC 3954 / HTE831) protein is Small ribosomal subunit protein uS11.